We begin with the raw amino-acid sequence, 306 residues long: TnpB-like protein aq_aa05 (306 aa).

C213, C216, C234, and C237 together coordinate Zn(2+).

This sequence belongs to the transposase 35 family.

This is TnpB-like protein aq_aa05 from Aquifex aeolicus (strain VF5).